Reading from the N-terminus, the 435-residue chain is UDP-N-acetylmuramoylalanine--D-glutamate ligase (435 aa).

114 to 120 is a binding site for ATP; it reads GSNGKST.

It belongs to the MurCDEF family.

Its subcellular location is the cytoplasm. The catalysed reaction is UDP-N-acetyl-alpha-D-muramoyl-L-alanine + D-glutamate + ATP = UDP-N-acetyl-alpha-D-muramoyl-L-alanyl-D-glutamate + ADP + phosphate + H(+). It participates in cell wall biogenesis; peptidoglycan biosynthesis. Its function is as follows. Cell wall formation. Catalyzes the addition of glutamate to the nucleotide precursor UDP-N-acetylmuramoyl-L-alanine (UMA). This chain is UDP-N-acetylmuramoylalanine--D-glutamate ligase, found in Haemophilus ducreyi (strain 35000HP / ATCC 700724).